A 100-amino-acid polypeptide reads, in one-letter code: NADH-quinone oxidoreductase subunit K (100 aa).

The next 3 helical transmembrane spans lie at 4–24 (LQHG…GLII), 28–48 (LLFM…AFVV), and 60–80 (VMYI…LALL).

Belongs to the complex I subunit 4L family. NDH-1 is composed of 13 different subunits. Subunits NuoA, H, J, K, L, M, N constitute the membrane sector of the complex.

The protein resides in the cell inner membrane. It carries out the reaction a quinone + NADH + 5 H(+)(in) = a quinol + NAD(+) + 4 H(+)(out). Functionally, NDH-1 shuttles electrons from NADH, via FMN and iron-sulfur (Fe-S) centers, to quinones in the respiratory chain. The immediate electron acceptor for the enzyme in this species is believed to be ubiquinone. Couples the redox reaction to proton translocation (for every two electrons transferred, four hydrogen ions are translocated across the cytoplasmic membrane), and thus conserves the redox energy in a proton gradient. This is NADH-quinone oxidoreductase subunit K from Yersinia enterocolitica serotype O:8 / biotype 1B (strain NCTC 13174 / 8081).